The primary structure comprises 204 residues: Urease accessory protein UreG (204 aa).

12–19 is a binding site for GTP; that stretch reads GPVGSGKT.

It belongs to the SIMIBI class G3E GTPase family. UreG subfamily. Homodimer. UreD, UreF and UreG form a complex that acts as a GTP-hydrolysis-dependent molecular chaperone, activating the urease apoprotein by helping to assemble the nickel containing metallocenter of UreC. The UreE protein probably delivers the nickel.

Its subcellular location is the cytoplasm. Facilitates the functional incorporation of the urease nickel metallocenter. This process requires GTP hydrolysis, probably effectuated by UreG. The polypeptide is Urease accessory protein UreG (Stutzerimonas stutzeri (strain A1501) (Pseudomonas stutzeri)).